Here is a 432-residue protein sequence, read N- to C-terminus: Serine hydroxymethyltransferase (432 aa).

(6S)-5,6,7,8-tetrahydrofolate-binding positions include Leu-127 and 131 to 133; that span reads GHL. Lys-236 is modified (N6-(pyridoxal phosphate)lysine).

Belongs to the SHMT family. Homodimer. It depends on pyridoxal 5'-phosphate as a cofactor.

It is found in the cytoplasm. The catalysed reaction is (6R)-5,10-methylene-5,6,7,8-tetrahydrofolate + glycine + H2O = (6S)-5,6,7,8-tetrahydrofolate + L-serine. The protein operates within one-carbon metabolism; tetrahydrofolate interconversion. It participates in amino-acid biosynthesis; glycine biosynthesis; glycine from L-serine: step 1/1. Functionally, catalyzes the reversible interconversion of serine and glycine with tetrahydrofolate (THF) serving as the one-carbon carrier. This reaction serves as the major source of one-carbon groups required for the biosynthesis of purines, thymidylate, methionine, and other important biomolecules. Also exhibits THF-independent aldolase activity toward beta-hydroxyamino acids, producing glycine and aldehydes, via a retro-aldol mechanism. The sequence is that of Serine hydroxymethyltransferase from Rhizobium etli (strain ATCC 51251 / DSM 11541 / JCM 21823 / NBRC 15573 / CFN 42).